The following is a 581-amino-acid chain: Peptidyl-prolyl cis-trans isomerase FKBP10 (581 aa).

An N-terminal signal peptide occupies residues 1 to 33; the sequence is MFLVGSSSHTLHRLRILPLLLLLQTLERGLGRA. PPIase FKBP-type domains follow at residues 61 to 149, 173 to 261, and 285 to 373; these read GDFV…LDVW, SDFV…LDVH, and GDFM…IDFH. Residues asparagine 69, asparagine 181, asparagine 293, asparagine 309, asparagine 351, asparagine 392, and asparagine 406 are each glycosylated (N-linked (GlcNAc...) asparagine). In terms of domain architecture, PPIase FKBP-type 4 spans 398–485; sequence GDFIRYHYNC…LFEVELVSRE (88 aa). EF-hand domains are found at residues 496-531 and 541-576; these read WYQD…QVNE and DPDK…DQER. Residues aspartate 509, asparagine 511, aspartate 513, glutamate 515, glutamate 520, aspartate 554, asparagine 556, aspartate 558, lysine 560, and glutamate 565 each coordinate Ca(2+). The interval 533–581 is disordered; sequence KGRLMPGQDPDKTISDMFQNQDRNQDGKITAEELKLKSDEDQERVHEEL. Residues 555 to 581 are compositionally biased toward basic and acidic residues; it reads RNQDGKITAEELKLKSDEDQERVHEEL. The Prevents secretion from ER motif lies at 578–581; it reads HEEL.

Post-translationally, N-glycosylated. Phosphorylated. In terms of tissue distribution, expressed in aorta, brain, heart, kidney, lung, spleen and testis. Not detected in liver.

It localises to the endoplasmic reticulum lumen. It carries out the reaction [protein]-peptidylproline (omega=180) = [protein]-peptidylproline (omega=0). Inhibited by both FK506 and rapamycin, but not by cyclosporin A. Functionally, PPIases accelerate the folding of proteins during protein synthesis. This is Peptidyl-prolyl cis-trans isomerase FKBP10 (Fkbp10) from Mus musculus (Mouse).